The sequence spans 418 residues: MSLVSNSLALIERGANEILKFDELERRLRSGRPLRIKAGFDPTAPDLHLGHTVLLNKMRQFQELGHQVIFLIGDFTGMIGDPTGKNVTRKPLSHEDVLANARTYEDQVFKVLDRTLTEVRFNSEWFGKMSAVDMIKLAAQHTVARMLERDDFAKRFVSQQPIVIHEFLYPLIQGYDSIALRADVELGGTDQKFNLLMGRALQEHHGQPPQVVLTMPLLEGLDGVAKMSKSLGNYIGIKEPPIDIVTKTMKIGDDLMWRWIELLSFKISAAEVVALREAVAKSELNPREVKLRLAHELVSRFYDNAAAEKAIAGWQAVVTGQGNNNLLPLQKINVPADGVRLVALLTKSGLAPSNSEAMRKLKERAVRVDGIVVDDAHLHFVPGFEGLIQIGKRNFAKVRLVTSSESHDFPESNGIDKS.

The 'HIGH' region signature appears at 42–51 (PTAPDLHLGH). Positions 226–230 (KMSKS) match the 'KMSKS' region motif. ATP is bound at residue Lys229. Positions 339 to 400 (VRLVALLTKS…GKRNFAKVRL (62 aa)) constitute an S4 RNA-binding domain.

Belongs to the class-I aminoacyl-tRNA synthetase family. TyrS type 2 subfamily. As to quaternary structure, homodimer.

The protein localises to the cytoplasm. It catalyses the reaction tRNA(Tyr) + L-tyrosine + ATP = L-tyrosyl-tRNA(Tyr) + AMP + diphosphate + H(+). Its function is as follows. Catalyzes the attachment of tyrosine to tRNA(Tyr) in a two-step reaction: tyrosine is first activated by ATP to form Tyr-AMP and then transferred to the acceptor end of tRNA(Tyr). The sequence is that of Tyrosine--tRNA ligase from Xylella fastidiosa (strain 9a5c).